Here is a 428-residue protein sequence, read N- to C-terminus: Enolase (428 aa).

Gln162 serves as a coordination point for (2R)-2-phosphoglycerate. Glu204 acts as the Proton donor in catalysis. Positions 241, 286, and 313 each coordinate Mg(2+). Positions 338, 367, 368, and 389 each coordinate (2R)-2-phosphoglycerate. Lys338 (proton acceptor) is an active-site residue.

The protein belongs to the enolase family. As to quaternary structure, component of the RNA degradosome, a multiprotein complex involved in RNA processing and mRNA degradation. Requires Mg(2+) as cofactor.

It is found in the cytoplasm. The protein localises to the secreted. It localises to the cell surface. The enzyme catalyses (2R)-2-phosphoglycerate = phosphoenolpyruvate + H2O. It participates in carbohydrate degradation; glycolysis; pyruvate from D-glyceraldehyde 3-phosphate: step 4/5. Its function is as follows. Catalyzes the reversible conversion of 2-phosphoglycerate (2-PG) into phosphoenolpyruvate (PEP). It is essential for the degradation of carbohydrates via glycolysis. This is Enolase from Vesicomyosocius okutanii subsp. Calyptogena okutanii (strain HA).